A 196-amino-acid chain; its full sequence is Putative NADH dehydrogenase/NAD(P)H nitroreductase Rpal_4764 (196 aa).

It belongs to the nitroreductase family. HadB/RutE subfamily. The cofactor is FMN.

The sequence is that of Putative NADH dehydrogenase/NAD(P)H nitroreductase Rpal_4764 from Rhodopseudomonas palustris (strain TIE-1).